The chain runs to 519 residues: SMR domain-containing protein At5g58720 (519 aa).

Residues 1–15 (MKQKNQHKKKKKRSC) are compositionally biased toward basic residues. 2 disordered regions span residues 1–47 (MKQK…REIE) and 92–128 (ESGD…CSED). Basic and acidic residues predominate over residues 28 to 47 (GNKKDVEEERKDGEGKREIE). The span at 98 to 127 (STSSVASGSSGQETASTSEYGAGSSSSCSE) shows a compositional bias: low complexity. Positions 428 to 502 (IDLHGQHVKP…NRGTLLIKLD (75 aa)) constitute a Smr domain.

As to quaternary structure, interacts with PRL1.

This is SMR domain-containing protein At5g58720 from Arabidopsis thaliana (Mouse-ear cress).